Consider the following 470-residue polypeptide: Siroheme synthase 2 (470 aa).

Residues 1 to 202 (MDYLPMFAKL…EDWQGAEQWL (202 aa)) are precorrin-2 dehydrogenase /sirohydrochlorin ferrochelatase. NAD(+)-binding positions include 22 to 23 (EV) and 43 to 44 (PE). Ser-126 carries the post-translational modification Phosphoserine. The uroporphyrinogen-III C-methyltransferase stretch occupies residues 214 to 470 (GEVVLVGAGP…TCDLKLVSLA (257 aa)). Pro-223 lines the S-adenosyl-L-methionine pocket. The active-site Proton acceptor is Asp-246. Lys-268 functions as the Proton donor in the catalytic mechanism. Residues 299–301 (GGD), 329–330 (TA), Met-381, and Gly-410 contribute to the S-adenosyl-L-methionine site.

It in the N-terminal section; belongs to the precorrin-2 dehydrogenase / sirohydrochlorin ferrochelatase family. The protein in the C-terminal section; belongs to the precorrin methyltransferase family.

The catalysed reaction is uroporphyrinogen III + 2 S-adenosyl-L-methionine = precorrin-2 + 2 S-adenosyl-L-homocysteine + H(+). It catalyses the reaction precorrin-2 + NAD(+) = sirohydrochlorin + NADH + 2 H(+). The enzyme catalyses siroheme + 2 H(+) = sirohydrochlorin + Fe(2+). The protein operates within cofactor biosynthesis; adenosylcobalamin biosynthesis; precorrin-2 from uroporphyrinogen III: step 1/1. It participates in cofactor biosynthesis; adenosylcobalamin biosynthesis; sirohydrochlorin from precorrin-2: step 1/1. Its pathway is porphyrin-containing compound metabolism; siroheme biosynthesis; precorrin-2 from uroporphyrinogen III: step 1/1. It functions in the pathway porphyrin-containing compound metabolism; siroheme biosynthesis; siroheme from sirohydrochlorin: step 1/1. The protein operates within porphyrin-containing compound metabolism; siroheme biosynthesis; sirohydrochlorin from precorrin-2: step 1/1. Multifunctional enzyme that catalyzes the SAM-dependent methylations of uroporphyrinogen III at position C-2 and C-7 to form precorrin-2 via precorrin-1. Then it catalyzes the NAD-dependent ring dehydrogenation of precorrin-2 to yield sirohydrochlorin. Finally, it catalyzes the ferrochelation of sirohydrochlorin to yield siroheme. In Aeromonas hydrophila subsp. hydrophila (strain ATCC 7966 / DSM 30187 / BCRC 13018 / CCUG 14551 / JCM 1027 / KCTC 2358 / NCIMB 9240 / NCTC 8049), this protein is Siroheme synthase 2.